The chain runs to 139 residues: Putative pre-16S rRNA nuclease (139 aa).

Belongs to the YqgF nuclease family.

The protein localises to the cytoplasm. Could be a nuclease involved in processing of the 5'-end of pre-16S rRNA. The polypeptide is Putative pre-16S rRNA nuclease (Streptococcus uberis (strain ATCC BAA-854 / 0140J)).